A 465-amino-acid chain; its full sequence is Probable protein phosphatase 2C 71 (465 aa).

Disordered regions lie at residues 14–47 (RPCK…ACRA), 68–119 (RPRD…GEVT), and 133–191 (SGGA…PAEE). Over residues 18–30 (LAPPPPPPLPVSP) the composition is skewed to pro residues. Composition is skewed to low complexity over residues 84 to 106 (AVAP…AAAE) and 133 to 143 (SGGAEATATSG). In terms of domain architecture, PPM-type phosphatase spans 222 to 460 (ASGAAILPHP…DDIAVVVSIV (239 aa)). The Mn(2+) site is built by D254, G255, D384, and D451.

It belongs to the PP2C family. The cofactor is Mg(2+). Requires Mn(2+) as cofactor.

It catalyses the reaction O-phospho-L-seryl-[protein] + H2O = L-seryl-[protein] + phosphate. The catalysed reaction is O-phospho-L-threonyl-[protein] + H2O = L-threonyl-[protein] + phosphate. The polypeptide is Probable protein phosphatase 2C 71 (Oryza sativa subsp. japonica (Rice)).